A 197-amino-acid chain; its full sequence is Rac-like GTP-binding protein ARAC1 (197 aa).

Residue 13-20 (GDGAVGKT) coordinates GTP. The short motif at 35–43 (YVPTVFDNF) is the Effector region element. Residues 60–64 (DTAGQ) and 118–121 (TKLD) contribute to the GTP site. Residue cysteine 194 is modified to Cysteine methyl ester. Residue cysteine 194 is the site of S-geranylgeranyl cysteine attachment. The propeptide at 195-197 (SIL) is removed in mature form.

It belongs to the small GTPase superfamily. Rho family. As to quaternary structure, interacts with SPK1. As to expression, ubiquitous.

It localises to the cytoplasm. Its subcellular location is the membrane. Functionally, inactive GDP-bound Rho GTPases reside in the cytosol, are found in a complex with Rho GDP-dissociation inhibitors (Rho GDIs), and are released from the GDI protein in order to translocate to membranes upon activation. This chain is Rac-like GTP-binding protein ARAC1 (ARAC1), found in Arabidopsis thaliana (Mouse-ear cress).